Reading from the N-terminus, the 105-residue chain is Large ribosomal subunit protein uL24 (105 aa).

It belongs to the universal ribosomal protein uL24 family. As to quaternary structure, part of the 50S ribosomal subunit.

Its function is as follows. One of two assembly initiator proteins, it binds directly to the 5'-end of the 23S rRNA, where it nucleates assembly of the 50S subunit. In terms of biological role, one of the proteins that surrounds the polypeptide exit tunnel on the outside of the subunit. This Acinetobacter baumannii (strain AB307-0294) protein is Large ribosomal subunit protein uL24.